The sequence spans 425 residues: MCDRNGGRRLRQWLIEQIDSEQYPGLIWENEEKTMFRIPWKHAGKQDYNQEVDASIFKAWAVFKGKFKEGDKAEPATWKTRLRCALNKSPDFEEVTDRSQLDISEPYKVYRIVPEEEQKCKIGVGNGSSLTDVGDMDCSPSAIDDLMKEPPCVDEYLGIIKRSPSPPQETCRNPPIPDWWMQQPSPSLPLVNGYTGYEQHHSGYSQMVITFFYSGRLVGHITTSYPEGCRLSLSQPSNHGEKLYTPDSLEHVRFPSAEAIQNDRQKQITKKLFGHLERGVLLHSNKQGIFIKRLCQGRVFWSGNTVVYKDRPSKLDRDEVVKIFDTNLFFRELQQYYNNQGRFPDSRVMLCFGEEFPDTVPLRCKLILVQVEQLCVRQVMEEAGKTCSSPMLPDDVQQEQVYRIFQDICGPHQRPLFRENQQIAV.

Residues 7-114 (GRRLRQWLIE…EPYKVYRIVP (108 aa)) constitute a DNA-binding region (IRF tryptophan pentad repeat).

It belongs to the IRF family.

The protein resides in the nucleus. It localises to the cytoplasm. Its function is as follows. Plays a role as a transcriptional activator or repressor. Specifically binds to the upstream regulatory region of type I IFN and IFN-inducible MHC class I genes (the interferon consensus sequence (ICS)). Plays a regulatory role in cells of the immune system. This is Interferon regulatory factor 8 (IRF8) from Gallus gallus (Chicken).